The chain runs to 388 residues: Succinate--CoA ligase [ADP-forming] subunit beta (388 aa).

Residues 9–244 form the ATP-grasp domain; the sequence is KQLFARYGLP…QSQEDPREAQ (236 aa). ATP contacts are provided by residues lysine 46, 53-55, glutamate 99, threonine 102, and glutamate 107; that span reads GRG. 2 residues coordinate Mg(2+): asparagine 199 and aspartate 213. Substrate-binding positions include asparagine 264 and 321 to 323; that span reads GIV.

Belongs to the succinate/malate CoA ligase beta subunit family. As to quaternary structure, heterotetramer of two alpha and two beta subunits. Requires Mg(2+) as cofactor.

The catalysed reaction is succinate + ATP + CoA = succinyl-CoA + ADP + phosphate. The enzyme catalyses GTP + succinate + CoA = succinyl-CoA + GDP + phosphate. It participates in carbohydrate metabolism; tricarboxylic acid cycle; succinate from succinyl-CoA (ligase route): step 1/1. Functionally, succinyl-CoA synthetase functions in the citric acid cycle (TCA), coupling the hydrolysis of succinyl-CoA to the synthesis of either ATP or GTP and thus represents the only step of substrate-level phosphorylation in the TCA. The beta subunit provides nucleotide specificity of the enzyme and binds the substrate succinate, while the binding sites for coenzyme A and phosphate are found in the alpha subunit. This is Succinate--CoA ligase [ADP-forming] subunit beta from Shigella dysenteriae serotype 1 (strain Sd197).